The sequence spans 117 residues: Large ribosomal subunit protein eL34 (117 aa).

Phosphoserine is present on serine 12. N6-acetyllysine is present on residues lysine 36 and lysine 43. A Glycyl lysine isopeptide (Lys-Gly) (interchain with G-Cter in SUMO2) cross-link involves residue lysine 108.

It belongs to the eukaryotic ribosomal protein eL34 family. In terms of assembly, component of the large ribosomal subunit.

The protein resides in the cytoplasm. Its subcellular location is the cytosol. It localises to the endoplasmic reticulum. In terms of biological role, component of the large ribosomal subunit. The ribosome is a large ribonucleoprotein complex responsible for the synthesis of proteins in the cell. This is Large ribosomal subunit protein eL34 (Rpl34) from Rattus norvegicus (Rat).